Reading from the N-terminus, the 507-residue chain is Inactive alanine aminotransferase (507 aa).

Pyridoxal 5'-phosphate is bound by residues alanine 173, serine 174, tyrosine 199, asparagine 255, and serine 324. The residue at position 327 (lysine 327) is an N6-(pyridoxal phosphate)lysine. Arginine 336 is a binding site for pyridoxal 5'-phosphate.

It belongs to the class-I pyridoxal-phosphate-dependent aminotransferase family. Alanine aminotransferase subfamily. As to quaternary structure, homodimer. Pyridoxal 5'-phosphate serves as cofactor.

Its subcellular location is the cytoplasm. The protein resides in the nucleus. Inactive alanine aminotransferase. Forms a catalytically active Schiff base with PLP, but lacks alanine transaminase activity, probably due to an altered structural conformation of the dimeric enzyme. This suggests this protein may have a yet undiscovered physiological function. This chain is Inactive alanine aminotransferase (ALT2), found in Saccharomyces cerevisiae (strain ATCC 204508 / S288c) (Baker's yeast).